Consider the following 269-residue polypeptide: Monofunctional glycosyltransferase (269 aa).

The chain crosses the membrane as a helical span at residues 46–66 (ILLTILIIIALFIGIMYFLST).

It belongs to the glycosyltransferase 51 family.

The protein localises to the cell membrane. The enzyme catalyses [GlcNAc-(1-&gt;4)-Mur2Ac(oyl-L-Ala-gamma-D-Glu-L-Lys-D-Ala-D-Ala)](n)-di-trans,octa-cis-undecaprenyl diphosphate + beta-D-GlcNAc-(1-&gt;4)-Mur2Ac(oyl-L-Ala-gamma-D-Glu-L-Lys-D-Ala-D-Ala)-di-trans,octa-cis-undecaprenyl diphosphate = [GlcNAc-(1-&gt;4)-Mur2Ac(oyl-L-Ala-gamma-D-Glu-L-Lys-D-Ala-D-Ala)](n+1)-di-trans,octa-cis-undecaprenyl diphosphate + di-trans,octa-cis-undecaprenyl diphosphate + H(+). It participates in cell wall biogenesis; peptidoglycan biosynthesis. Peptidoglycan polymerase that catalyzes glycan chain elongation using lipid-linked disaccharide-pentapeptide as the substrate. In Staphylococcus aureus (strain JH1), this protein is Monofunctional glycosyltransferase.